The sequence spans 326 residues: Regulation of nuclear pre-mRNA domain-containing protein 1B (326 aa).

S2 carries the N-acetylserine modification. One can recognise a CID domain in the interval S2–K133. Residues L127–T149 are disordered. Residues S128–K144 are compositionally biased toward basic and acidic residues. 2 positions are modified to phosphoserine: S132 and S134. A Phosphotyrosine modification is found at Y161. S166 and S299 each carry phosphoserine.

Belongs to the UPF0400 (RTT103) family. As to quaternary structure, homodimer. May form a heterodimer with RPRD1A. Associates with RPAP2. Associates with the RNA polymerase II complex. Preferentially expressed in a range of tumor tissues including colon, lung, liver, breast, prostate, stomach, uterine endometrium and cervical cancers with higher levels in tumors than in adjacent non-tumor tissue (at protein level).

The protein resides in the nucleus. Functionally, interacts with phosphorylated C-terminal heptapeptide repeat domain (CTD) of the largest RNA polymerase II subunit POLR2A, and participates in dephosphorylation of the CTD by RPAP2. Transcriptional regulator which enhances expression of CCND1. Promotes binding of RNA polymerase II to the CCDN1 promoter and to the termination region before the poly-A site but decreases its binding after the poly-A site. Prevents RNA polymerase II from reading through the 3' end termination site and may allow it to be recruited back to the promoter through promotion of the formation of a chromatin loop. Also enhances the transcription of a number of other cell cycle-related genes including CDK2, CDK4, CDK6 and cyclin-E but not CDKN1A, CDKN1B or cyclin-A. Promotes cell proliferation. This Homo sapiens (Human) protein is Regulation of nuclear pre-mRNA domain-containing protein 1B (RPRD1B).